The sequence spans 138 residues: Small ribosomal subunit protein uS11c (138 aa).

The interval 1–22 (MAKAIPKISSRRNGRIGSRKGA) is disordered. The segment covering 9-22 (SSRRNGRIGSRKGA) has biased composition (basic residues).

It belongs to the universal ribosomal protein uS11 family. In terms of assembly, part of the 30S ribosomal subunit.

The protein localises to the plastid. The protein resides in the chloroplast. In Nicotiana tabacum (Common tobacco), this protein is Small ribosomal subunit protein uS11c.